We begin with the raw amino-acid sequence, 222 residues long: Salivary anticoagulant protein P23 (222 aa).

The N-terminal stretch at 1–17 (MLTVSLLTLSLAAYASA) is a signal peptide. N-linked (GlcNAc...) asparagine glycosylation is found at Asn56, Asn73, Asn109, and Asn114.

As to expression, salivary gland (at protein level). Adult midgut.

The protein localises to the secreted. In terms of biological role, inhibits host coagulation by delaying thrombin generation and reducing endogenous thrombin potential (ETP). The polypeptide is Salivary anticoagulant protein P23 (Ixodes scapularis (Black-legged tick)).